The following is a 116-amino-acid chain: Large ribosomal subunit protein uL22 (116 aa).

It belongs to the universal ribosomal protein uL22 family. As to quaternary structure, part of the 50S ribosomal subunit.

Functionally, this protein binds specifically to 23S rRNA; its binding is stimulated by other ribosomal proteins, e.g. L4, L17, and L20. It is important during the early stages of 50S assembly. It makes multiple contacts with different domains of the 23S rRNA in the assembled 50S subunit and ribosome. The globular domain of the protein is located near the polypeptide exit tunnel on the outside of the subunit, while an extended beta-hairpin is found that lines the wall of the exit tunnel in the center of the 70S ribosome. This Orientia tsutsugamushi (strain Boryong) (Rickettsia tsutsugamushi) protein is Large ribosomal subunit protein uL22.